The sequence spans 179 residues: MAATEPILAATGSPAAVPPEKLEGAGSSSAPERNCVGSSLPEASPPAPEPSSPNAAVPEAIPTPRAAASAALELPLGPAPVSVAPQAEAEARSTPGPAGSRLGPETFRQRFRQFRYQDAAGPREAFRQLRELSRQWLRPDIRTKEQIVEMLVQEQLLAILPEAARARRIRRRTDVRITG.

The disordered stretch occupies residues 1-104 (MAATEPILAA…PGPAGSRLGP (104 aa)). Positions 52–80 (SPNAAVPEAIPTPRAAASAALELPLGPAP) are enriched in low complexity. Residues 108 to 166 (RQRFRQFRYQDAAGPREAFRQLRELSRQWLRPDIRTKEQIVEMLVQEQLLAILPEAARA) form the SCAN box domain.

Interacts with ZNF202.

It localises to the nucleus. Functionally, may regulate transcriptional activity. The sequence is that of SCAN domain-containing protein 1 (SCAND1) from Homo sapiens (Human).